The primary structure comprises 255 residues: 5-oxoprolinase subunit A (255 aa).

It belongs to the LamB/PxpA family. As to quaternary structure, forms a complex composed of PxpA, PxpB and PxpC.

The enzyme catalyses 5-oxo-L-proline + ATP + 2 H2O = L-glutamate + ADP + phosphate + H(+). In terms of biological role, catalyzes the cleavage of 5-oxoproline to form L-glutamate coupled to the hydrolysis of ATP to ADP and inorganic phosphate. This chain is 5-oxoprolinase subunit A, found in Clostridium beijerinckii (strain ATCC 51743 / NCIMB 8052) (Clostridium acetobutylicum).